Reading from the N-terminus, the 454-residue chain is Bifunctional protein GlmU (454 aa).

Positions 1 to 232 (MTDRTCLSIV…VDNVIGINNR (232 aa)) are pyrophosphorylase. UDP-N-acetyl-alpha-D-glucosamine is bound by residues 11-14 (LAAG), K25, Q78, and 83-84 (GT). D108 serves as a coordination point for Mg(2+). Residues G144, E158, N173, and N230 each coordinate UDP-N-acetyl-alpha-D-glucosamine. N230 is a binding site for Mg(2+). Positions 233–253 (AELAEAETIWQNRKRRELMLS) are linker. The segment at 254–454 (GVTLIAPETV…AIKAAKSVSK (201 aa)) is N-acetyltransferase. Residues R319 and K337 each coordinate UDP-N-acetyl-alpha-D-glucosamine. The Proton acceptor role is filled by H349. Residues Y352 and N363 each coordinate UDP-N-acetyl-alpha-D-glucosamine. Residues A366, 372–373 (NY), S391, S409, and R426 each bind acetyl-CoA.

This sequence in the N-terminal section; belongs to the N-acetylglucosamine-1-phosphate uridyltransferase family. In the C-terminal section; belongs to the transferase hexapeptide repeat family. In terms of assembly, homotrimer. The cofactor is Mg(2+).

Its subcellular location is the cytoplasm. It catalyses the reaction alpha-D-glucosamine 1-phosphate + acetyl-CoA = N-acetyl-alpha-D-glucosamine 1-phosphate + CoA + H(+). It carries out the reaction N-acetyl-alpha-D-glucosamine 1-phosphate + UTP + H(+) = UDP-N-acetyl-alpha-D-glucosamine + diphosphate. The protein operates within nucleotide-sugar biosynthesis; UDP-N-acetyl-alpha-D-glucosamine biosynthesis; N-acetyl-alpha-D-glucosamine 1-phosphate from alpha-D-glucosamine 6-phosphate (route II): step 2/2. It functions in the pathway nucleotide-sugar biosynthesis; UDP-N-acetyl-alpha-D-glucosamine biosynthesis; UDP-N-acetyl-alpha-D-glucosamine from N-acetyl-alpha-D-glucosamine 1-phosphate: step 1/1. It participates in bacterial outer membrane biogenesis; LPS lipid A biosynthesis. In terms of biological role, catalyzes the last two sequential reactions in the de novo biosynthetic pathway for UDP-N-acetylglucosamine (UDP-GlcNAc). The C-terminal domain catalyzes the transfer of acetyl group from acetyl coenzyme A to glucosamine-1-phosphate (GlcN-1-P) to produce N-acetylglucosamine-1-phosphate (GlcNAc-1-P), which is converted into UDP-GlcNAc by the transfer of uridine 5-monophosphate (from uridine 5-triphosphate), a reaction catalyzed by the N-terminal domain. This chain is Bifunctional protein GlmU, found in Brucella melitensis biotype 1 (strain ATCC 23456 / CCUG 17765 / NCTC 10094 / 16M).